We begin with the raw amino-acid sequence, 97 residues long: Intermembrane phospholipid transport system binding protein MlaB (97 aa).

The STAS domain occupies 1–97; that stretch reads MSESLSWMQT…YNLPADVLPR (97 aa).

As to quaternary structure, the complex is composed of two ATP-binding proteins (MlaF), two transmembrane proteins (MlaE), two cytoplasmic solute-binding proteins (MlaB) and six periplasmic solute-binding proteins (MlaD).

The protein localises to the cytoplasm. Its function is as follows. Part of the ABC transporter complex MlaFEDB, which is involved in a phospholipid transport pathway that maintains lipid asymmetry in the outer membrane by retrograde trafficking of phospholipids from the outer membrane to the inner membrane. MlaB plays critical roles in both the assembly and activity of the complex. May act by modulating MlaF structure and stability. The polypeptide is Intermembrane phospholipid transport system binding protein MlaB (Escherichia coli (strain K12)).